A 431-amino-acid polypeptide reads, in one-letter code: Tryptophan synthase beta chain (431 aa).

Lys109 carries the post-translational modification N6-(pyridoxal phosphate)lysine.

This sequence belongs to the TrpB family. In terms of assembly, tetramer of two alpha and two beta chains. Pyridoxal 5'-phosphate is required as a cofactor.

The enzyme catalyses (1S,2R)-1-C-(indol-3-yl)glycerol 3-phosphate + L-serine = D-glyceraldehyde 3-phosphate + L-tryptophan + H2O. The protein operates within amino-acid biosynthesis; L-tryptophan biosynthesis; L-tryptophan from chorismate: step 5/5. In terms of biological role, the beta subunit is responsible for the synthesis of L-tryptophan from indole and L-serine. This is Tryptophan synthase beta chain from Deinococcus radiodurans (strain ATCC 13939 / DSM 20539 / JCM 16871 / CCUG 27074 / LMG 4051 / NBRC 15346 / NCIMB 9279 / VKM B-1422 / R1).